We begin with the raw amino-acid sequence, 274 residues long: Syntaxin-12 (274 aa).

2 disordered regions span residues 1–20 and 128–147; these read MSYG…PQPR and EKES…EDRQ. Ser2 carries the N-acetylserine modification. Over 2 to 250 the chain is Cytoplasmic; it reads SYGPLDMYRN…AYYQKKSRKK (249 aa). Residues 33 to 130 adopt a coiled-coil conformation; the sequence is IQRISQATAQ…QRKVSEKEKE (98 aa). 4 positions are modified to phosphoserine: Ser139, Ser142, Ser218, and Ser225. A t-SNARE coiled-coil homology domain is found at 178–240; sequence LELIKERETA…ERATDQLQRA (63 aa). Residues 251–271 traverse the membrane as a helical; Anchor for type IV membrane protein segment; it reads MCILVLVLSVIVTVLVVVIWV. At 272–274 the chain is on the vesicular side; the sequence is ASK.

The protein belongs to the syntaxin family. Associates with the BLOC-1 complex. Interacts with BLOC1S6. Interacts with NAPA and SNAP23. Identified in a complex containing STX6, STX12, VAMP4 and VTI1A. Interacts with GRIPAP1. Forms a complex with GRIP1, GRIA2 and NSG1; controls the intracellular fate of AMPAR and the endosomal sorting of the GRIA2 subunit toward recycling and membrane targeting. Interacts with NSG1. Interacts with TPC1. Interacts (via N-terminus) with VPS13B.

Its subcellular location is the endosome membrane. The protein resides in the golgi apparatus membrane. The protein localises to the endomembrane system. It is found in the early endosome membrane. It localises to the recycling endosome membrane. Functionally, SNARE promoting fusion of transport vesicles with target membranes. Together with SNARE STX6, promotes movement of vesicles from endosomes to the cell membrane, and may therefore function in the endocytic recycling pathway. Through complex formation with GRIP1, GRIA2 and NSG1 controls the intracellular fate of AMPAR and the endosomal sorting of the GRIA2 subunit toward recycling and membrane targeting. This is Syntaxin-12 (Stx12) from Mus musculus (Mouse).